The sequence spans 160 residues: uncharacterized protein (160 aa).

At 1 to 33 the chain is on the extracellular side; that stretch reads MPLRPCRHHQGFLPKKQWRAKFPQLIVLMGRVA. A helical membrane pass occupies residues 34–54; that stretch reads AEELLPAVAVAAVVVAVVVAV. The Cytoplasmic portion of the chain corresponds to 55 to 68; it reads ERVVPLLFVHRPDS. A helical membrane pass occupies residues 69–89; that stretch reads FFLIFFFQSCFVCCCCCCSCS. Topologically, residues 90–119 are extracellular; sequence TSLKAYSSEKEKQKYGKRGNGNTPLVQRLV. The helical transmembrane segment at 120 to 140 threads the bilayer; sequence TLSYLALLILVLSIELLTWFV. Residues 141 to 160 lie on the Cytoplasmic side of the membrane; that stretch reads KKQRTGNKKQKDKEKNALLL.

It is found in the membrane. This is an uncharacterized protein from Saccharomyces cerevisiae (strain ATCC 204508 / S288c) (Baker's yeast).